The primary structure comprises 342 residues: CD2 antigen cytoplasmic tail-binding protein 2 (342 aa).

A disordered region spans residues 1–64; that stretch reads MPKRKVTFQG…DEEGSSKYDI (64 aa). Residue Lys26 forms a Glycyl lysine isopeptide (Lys-Gly) (interchain with G-Cter in SUMO2) linkage. Lys44 is modified (N6-acetyllysine). A phosphoserine mark is found at Ser46, Ser49, and Ser117. 2 disordered regions span residues 130-150 and 177-200; these read RPPD…GQTP and LGAR…PQRL. A Phosphoserine modification is found at Ser196. The region spanning 281–339 is the GYF domain; sequence DVMWEYKWENTGDAELYGPFTSAQMQTWVSEGYFPDGVYCRKLDPPGGQFYNSKRIDFE.

Component of the U5 snRNP complex composed of the U5 snRNA and at least PRPF6, PRPF8, SNRNP200, EFTUD2, SNRNP40, DDX23, TXNL4A and CD2BP2. Interacts directly with TXNL4A and PRPF6. Interacts (via GYF domain) with CD2 (via Pro-rich sequence in the cytoplasmic domain). Interacts with PQBP1.

The protein resides in the cytoplasm. The protein localises to the nucleus. Functionally, involved in pre-mRNA splicing as component of the U5 snRNP complex that is involved in spliceosome assembly. This is CD2 antigen cytoplasmic tail-binding protein 2 (Cd2bp2) from Mus musculus (Mouse).